Here is a 411-residue protein sequence, read N- to C-terminus: Na(+)/H(+) antiporter NhaA 2 (411 aa).

The next 10 membrane-spanning stretches (helical) occupy residues 18 to 38 (VGGSILLIAAAIALVWANSPV), 59 to 79 (LTVGTWAQDGLLAVFFFVAGL), 97 to 117 (LLPIIAACGGVVVPAIIAATI), 127 to 147 (GWAIPVATDIAFALGVLALTG), 167 to 187 (LLAIVLIAVLFTSSIALLWLL), 218 to 238 (WYCMHDAGIHATLAGVALGLL), 261 to 281 (PLSAGVCVPVFALFASGVALS), 297 to 317 (VIAGLLVGKTVGIFGISWLAI), 338 to 358 (VLGAIGFTVSLLVADLALAGI), and 366 to 386 (IAKVAVLVTSLTASLIGSALL).

Belongs to the NhaA Na(+)/H(+) (TC 2.A.33) antiporter family.

The protein resides in the cell membrane. It carries out the reaction Na(+)(in) + 2 H(+)(out) = Na(+)(out) + 2 H(+)(in). In terms of biological role, na(+)/H(+) antiporter that extrudes sodium in exchange for external protons. The protein is Na(+)/H(+) antiporter NhaA 2 of Rhodococcus jostii (strain RHA1).